The sequence spans 217 residues: uncharacterized protein (217 aa).

The ABC transporter domain occupies 14 to 217 (LAVNNLCIER…NELATEIISL (204 aa)). 46–53 (GEIGSGKT) contacts ATP.

Belongs to the ABC transporter superfamily.

This is an uncharacterized protein from Haemophilus influenzae (strain ATCC 51907 / DSM 11121 / KW20 / Rd).